The chain runs to 78 residues: Putative snRNP Sm-like protein (78 aa).

In terms of domain architecture, Sm spans 4-76; the sequence is RPLDVIHRSL…VLAISPVDVG (73 aa).

The protein belongs to the snRNP Sm proteins family.

The protein is Putative snRNP Sm-like protein of Thermococcus onnurineus (strain NA1).